The primary structure comprises 143 residues: Flagellar assembly factor FliW (143 aa).

It belongs to the FliW family. As to quaternary structure, interacts with translational regulator CsrA and flagellin(s).

It is found in the cytoplasm. Its function is as follows. Acts as an anti-CsrA protein, binds CsrA and prevents it from repressing translation of its target genes, one of which is flagellin. Binds to flagellin and participates in the assembly of the flagellum. This chain is Flagellar assembly factor FliW, found in Bacillus licheniformis (strain ATCC 14580 / DSM 13 / JCM 2505 / CCUG 7422 / NBRC 12200 / NCIMB 9375 / NCTC 10341 / NRRL NRS-1264 / Gibson 46).